Consider the following 151-residue polypeptide: Chaperonin GroEL (151 aa).

Position 41-45 (41-45) interacts with ATP; it reads DGTTT.

The protein belongs to the chaperonin (HSP60) family. Forms a cylinder of 14 subunits composed of two heptameric rings stacked back-to-back. Interacts with the co-chaperonin GroES.

It localises to the cytoplasm. It catalyses the reaction ATP + H2O + a folded polypeptide = ADP + phosphate + an unfolded polypeptide.. In terms of biological role, together with its co-chaperonin GroES, plays an essential role in assisting protein folding. The GroEL-GroES system forms a nano-cage that allows encapsulation of the non-native substrate proteins and provides a physical environment optimized to promote and accelerate protein folding. The protein is Chaperonin GroEL of Mycobacterium avium.